The following is a 147-amino-acid chain: uncharacterized protein (147 aa).

This is an uncharacterized protein from Gallid herpesvirus 2 (strain Chicken/Md5/ATCC VR-987) (GaHV-2).